A 450-amino-acid chain; its full sequence is Phosphoglucosamine mutase (450 aa).

Catalysis depends on serine 102, which acts as the Phosphoserine intermediate. 4 residues coordinate Mg(2+): serine 102, aspartate 243, aspartate 245, and aspartate 247. Serine 102 is modified (phosphoserine).

Belongs to the phosphohexose mutase family. It depends on Mg(2+) as a cofactor. Post-translationally, activated by phosphorylation.

The catalysed reaction is alpha-D-glucosamine 1-phosphate = D-glucosamine 6-phosphate. In terms of biological role, catalyzes the conversion of glucosamine-6-phosphate to glucosamine-1-phosphate. This chain is Phosphoglucosamine mutase, found in Allorhizobium ampelinum (strain ATCC BAA-846 / DSM 112012 / S4) (Agrobacterium vitis (strain S4)).